The sequence spans 427 residues: 3-phosphoshikimate 1-carboxyvinyltransferase (427 aa).

3 residues coordinate 3-phosphoshikimate: Lys22, Ser23, and Arg27. Lys22 is a binding site for phosphoenolpyruvate. The phosphoenolpyruvate site is built by Gly96 and Arg124. Ser169, Ser170, Gln171, Ser197, Asp313, Asn336, and Lys340 together coordinate 3-phosphoshikimate. Residue Gln171 participates in phosphoenolpyruvate binding. The active-site Proton acceptor is Asp313. Phosphoenolpyruvate is bound by residues Arg344, Arg386, and Lys411.

Belongs to the EPSP synthase family. As to quaternary structure, monomer.

It localises to the cytoplasm. The catalysed reaction is 3-phosphoshikimate + phosphoenolpyruvate = 5-O-(1-carboxyvinyl)-3-phosphoshikimate + phosphate. It functions in the pathway metabolic intermediate biosynthesis; chorismate biosynthesis; chorismate from D-erythrose 4-phosphate and phosphoenolpyruvate: step 6/7. Functionally, catalyzes the transfer of the enolpyruvyl moiety of phosphoenolpyruvate (PEP) to the 5-hydroxyl of shikimate-3-phosphate (S3P) to produce enolpyruvyl shikimate-3-phosphate and inorganic phosphate. In Escherichia coli O1:K1 / APEC, this protein is 3-phosphoshikimate 1-carboxyvinyltransferase.